Here is a 226-residue protein sequence, read N- to C-terminus: Probable endolytic peptidoglycan transglycosylase RlpA (226 aa).

The first 26 residues, M1–S26, serve as a signal peptide directing secretion. Residue C27 is the site of N-palmitoyl cysteine attachment. C27 carries the S-diacylglycerol cysteine lipid modification.

The protein belongs to the RlpA family.

It localises to the cell membrane. Lytic transglycosylase with a strong preference for naked glycan strands that lack stem peptides. The polypeptide is Probable endolytic peptidoglycan transglycosylase RlpA (Aquifex aeolicus (strain VF5)).